Here is a 226-residue protein sequence, read N- to C-terminus: MPVKGGTKCIKYLLFGFNFIFWLAGIAVLAVGLWLRFDSQTKSIFEQDSQPSSFYTGVYILIGAGALMMLVGFLGCCGAVQESQCMLGLFFGFLLVIFAIEIAAAIWGYSHKDEVIQEVQEFYKDTYNKLKSKDEPQRDTLKAIHYALDCCGLAGGVEQFISDICPQKDILSSITVKPCPEAIKEVFHNKFHIIGAVGIGIAVVMIFGMIFSMILCCAIRRSREMV.

Over 1–12 (MPVKGGTKCIKY) the chain is Cytoplasmic. The S-palmitoyl cysteine moiety is linked to residue Cys9. Residues 13–33 (LLFGFNFIFWLAGIAVLAVGL) traverse the membrane as a helical segment. The Extracellular segment spans residues 34-53 (WLRFDSQTKSIFEQDSQPSS). The helical transmembrane segment at 54-74 (FYTGVYILIGAGALMMLVGFL) threads the bilayer. Residues 75–85 (GCCGAVQESQC) are Cytoplasmic-facing. 3 S-palmitoyl cysteine lipidation sites follow: Cys76, Cys77, and Cys85. The chain crosses the membrane as a helical span at residues 86–109 (MLGLFFGFLLVIFAIEIAAAIWGY). Topologically, residues 110-193 (SHKDEVIQEV…KEVFHNKFHI (84 aa)) are extracellular. 2 disulfides stabilise this stretch: Cys150/Cys179 and Cys151/Cys165. A helical transmembrane segment spans residues 194–219 (IGAVGIGIAVVMIFGMIFSMILCCAI). 2 S-palmitoyl cysteine lipidation sites follow: Cys216 and Cys217. Residues 220 to 226 (RRSREMV) are Cytoplasmic-facing.

Belongs to the tetraspanin (TM4SF) family. Forms both disulfide-linked homodimers and higher homooligomers as well as heterooligomers with other members of the tetraspanin family. Interacts (via the second extracellular domain) with integrin ITGAV:ITGB3. Interacts with integrin ITGA6:ITGB1; interaction takes place in oocytes and is involved in sperm-egg fusion. Part of integrin-tetraspanin complexes composed of CD81, beta-1 and beta-2 integrins in the membrane of monocyte/macrophages. Interacts with CD63; identified in a complex with CD63 and ITGB3. Associates with CR2/CD21 and with PTGFRN/CD9P1. Part of a complex composed of CD9, CD81, PTGFRN and IGSF8. Interacts directly with IGSF8. Interacts with PDPN; this interaction is homophilic and attenuates platelet aggregation and pulmonary metastasis induced by PDPN. Interacts (on T cell side) with CD81 at immunological synapses between antigen-presenting cells and T cells. Palmitoylated at a low, basal level in unstimulated platelets. The level of palmitoylation increases when platelets are activated by thrombin (in vitro). The protein exists in three forms with molecular masses between 22 and 27 kDa, and is known to carry covalently linked fatty acids. Palmitoylation by ZDHHC2 regulates CD9 expression, association with other tetraspanin family proteins and function in cell adhesion.

Its subcellular location is the cell membrane. The protein localises to the membrane. It localises to the secreted. The protein resides in the extracellular exosome. Integral membrane protein associated with integrins, which regulates different processes, such as sperm-egg fusion, platelet activation and aggregation, and cell adhesion. Present at the cell surface of oocytes and plays a key role in sperm-egg fusion, possibly by organizing multiprotein complexes and the morphology of the membrane required for the fusion. In myoblasts, associates with CD81 and PTGFRN and inhibits myotube fusion during muscle regeneration. In macrophages, associates with CD81 and beta-1 and beta-2 integrins, and prevents macrophage fusion into multinucleated giant cells specialized in ingesting complement-opsonized large particles. Also prevents the fusion between mononuclear cell progenitors into osteoclasts in charge of bone resorption. Acts as a receptor for PSG17. Involved in platelet activation and aggregation. Regulates paranodal junction formation. Involved in cell adhesion, cell motility and tumor metastasis. This is CD9 antigen from Felis catus (Cat).